Reading from the N-terminus, the 89-residue chain is Putative regulatory protein CPE1749 (89 aa).

This sequence belongs to the RemA family.

This Clostridium perfringens (strain 13 / Type A) protein is Putative regulatory protein CPE1749.